Reading from the N-terminus, the 509-residue chain is Surface lipoprotein assembly modifier (509 aa).

A signal peptide spans methionine 1–alanine 32. The N-terminal domain stretch occupies residues asparagine 33–aspartate 204. Residues proline 43–serine 72 form a disordered region. Polar residues predominate over residues threonine 46–phenylalanine 57. Residues phenylalanine 120 to leucine 153 form a TPR repeat. The segment at serine 205 to phenylalanine 509 is C-terminal probable beta barrel. 14 consecutive transmembrane segments (beta stranded) span residues tryptophan 206–histidine 216, leucine 245–serine 256, phenylalanine 261–asparagine 270, serine 284–arginine 294, threonine 298–glutamine 308, serine 331–leucine 341, tryptophan 345–glutamate 355, tyrosine 371–proline 381, phenylalanine 386–glutamine 395, glutamine 408–glutamate 417, serine 423–threonine 432, glycine 461–serine 470, isoleucine 476–glutamine 485, and asparagine 499–phenylalanine 509.

The protein belongs to the Slam family.

The protein localises to the cell outer membrane. Its function is as follows. Required for correct export to the cell surface of some cell outer membrane lipoproteins (tested with PM1514) upon heterologous expression in E.coli and probably also in Pasteurella. The polypeptide is Surface lipoprotein assembly modifier (Pasteurella multocida (strain Pm70)).